We begin with the raw amino-acid sequence, 83 residues long: MNYLVMISLALLLMIGVESKRDGYIVYPNNCVYHCVPPCDGLCKKNGGSSGSCSFLVPSGLACWCKDLPDNVPIKDTSRKCTR.

The signal sequence occupies residues 1-19; it reads MNYLVMISLALLLMIGVES. The LCN-type CS-alpha/beta domain occupies 21–82; that stretch reads RDGYIVYPNN…PIKDTSRKCT (62 aa). 4 cysteine pairs are disulfide-bonded: cysteine 31-cysteine 81, cysteine 35-cysteine 53, cysteine 39-cysteine 63, and cysteine 43-cysteine 65. Residue arginine 83 is a propeptide, removed by a carboxypeptidase (in neurotoxin-1/1').

It belongs to the long (4 C-C) scorpion toxin superfamily. Sodium channel inhibitor family. Alpha subfamily. Expressed by the venom gland.

It localises to the secreted. Alpha toxins bind voltage-independently at site-3 of sodium channels (Nav) and inhibit the inactivation of the activated channels, thereby blocking neuronal transmission. Is active against mammals and binds with high affinity rat brain synaptosomes. This chain is Neurotoxin-1'', found in Androctonus australis (Sahara scorpion).